Consider the following 197-residue polypeptide: Imidazoleglycerol-phosphate dehydratase (197 aa).

This sequence belongs to the imidazoleglycerol-phosphate dehydratase family.

It is found in the cytoplasm. It catalyses the reaction D-erythro-1-(imidazol-4-yl)glycerol 3-phosphate = 3-(imidazol-4-yl)-2-oxopropyl phosphate + H2O. It functions in the pathway amino-acid biosynthesis; L-histidine biosynthesis; L-histidine from 5-phospho-alpha-D-ribose 1-diphosphate: step 6/9. This is Imidazoleglycerol-phosphate dehydratase from Pseudomonas syringae pv. syringae (strain B728a).